The chain runs to 341 residues: Bis(monoacylglycero)phosphate synthase CLN5 (341 aa).

Residues 1-13 (MLRGGPCGAHWRP) lie on the Cytoplasmic side of the membrane. The chain crosses the membrane as a helical; Signal-anchor for type II membrane protein span at residues 14 to 30 (ALALALLGLATILGASP). At 31–341 (TSGQRWPVPY…PTRHTTFTDL (311 aa)) the chain is on the lumenal side. Disulfide bonds link cysteine 53–cysteine 142 and cysteine 60–cysteine 148. Histidine 100 serves as the catalytic Proton acceptor. Asparagine 113, asparagine 126, asparagine 161, and asparagine 186 each carry an N-linked (GlcNAc...) asparagine glycan. Cysteine 214 (nucleophile; Acyl-thioester intermediate) is an active-site residue. 3 N-linked (GlcNAc...) asparagine glycosylation sites follow: asparagine 238, asparagine 254, and asparagine 264. The tract at residues 287–326 (FLMNFLKIFDTVIIHRQFYLFYNFEYWFLPMKPPFVKITY) is membrane-anchoring.

It belongs to the CLN5 family. As to quaternary structure, multimer. Interacts with PPT1, TPP1, CLN3, CLN6, CLN8, ATP5F1A and ATP5F1B. Interacts with SORT1, RAB5A and RAB7A. In terms of processing, N-glycosylated with both high mannose and complex type sugars. Glycosylation is important for proper folding and trafficking to the lysosomes. Post-translationally, the type II membrane signal anchor is proteolytically cleaved to produce a mature form that is transported to the lysosomes (Bis(monoacylglycero)phosphate synthase CLN5, secreted form). Can undergo proteolytic cleavage at the C-terminus, probably by a cysteine protease and may involve the removal of approximately 10-15 residues from the C-terminal end. Heart, kidney, liver, spleen, muscle and rectum (at protein level).

It is found in the lysosome. It localises to the membrane. It carries out the reaction S-hexadecanoyl-L-cysteinyl-[protein] + H2O = L-cysteinyl-[protein] + hexadecanoate + H(+). It catalyses the reaction 2 1-acyl-sn-glycero-3-phospho-(1'-sn-glycerol) = 1-acyl-sn-glycero-3-phospho-(3'-acyl-sn-1'-glycerol) + sn-glycero-3-phospho-(1'-sn-glycerol). The catalysed reaction is 2 1-(9Z-octadecenoyl)-sn-glycero-3-phospho-(1'-sn-glycerol) = 1-(9Z-octadecenoyl)-sn-glycero-3-phospho-(3'-(9Z-octadecenoyl)-1'-sn-glycerol) + sn-glycero-3-phospho-(1'-sn-glycerol). The enzyme catalyses 2 1-octadecanoyl-sn-glycero-3-phospho-(1'-sn-glycerol) = 1-octadecanoyl-sn-glycero-3-phospho-(3'-octadecanoyl-1'-sn-glycerol) + sn-glycero-3-phospho-(1'-sn-glycerol). It carries out the reaction 2 1-hexadecanoyl-sn-glycero-3-phospho-(1'-sn-glycerol) = 1-hexadecanoyl-sn-glycero-3-phospho-(3'-hexadecanoyl-1'-sn-glycerol) + sn-glycero-3-phospho-(1'-sn-glycerol). It catalyses the reaction 2 1-tetradecanoyl-sn-glycero-3-phospho-(1'-sn-glycerol) = 1-tetradecanoyl-sn-glycero-3-phospho-(3'-tetradecanoyl-1'-sn-glycerol) + sn-glycero-3-phospho-(1'-sn-glycerol). Catalyzes the synthesis of bis(monoacylglycero)phosphate (BMP) via transacylation of 2 molecules of lysophosphatidylglycerol (LPG). BMP also known as lysobisphosphatidic acid plays a key role in the formation of intraluminal vesicles and in maintaining intracellular cholesterol homeostasis. Can use only LPG as the exclusive lysophospholipid acyl donor for base exchange and displays BMP synthase activity towards various LPGs (LPG 14:0, LPG 16:0, LPG 18:0, LPG 18:1) with a higher preference for longer chain lengths. Plays a role in influencing the retrograde trafficking of lysosomal sorting receptors SORT1 and IGF2R from the endosomes to the trans-Golgi network by controlling the recruitment of retromer complex to the endosomal membrane. Regulates the localization and activation of RAB7A which is required to recruit the retromer complex to the endosomal membrane. In terms of biological role, exhibits palmitoyl protein thioesterase (S-depalmitoylation) activity in vitro and most likely plays a role in protein S-depalmitoylation. The polypeptide is Bis(monoacylglycero)phosphate synthase CLN5 (Cln5) (Mus musculus (Mouse)).